Here is a 199-residue protein sequence, read N- to C-terminus: Pneumococcal vaccine antigen A homolog (199 aa).

The protein localises to the cell surface. The sequence is that of Pneumococcal vaccine antigen A homolog (pvaA) from Streptococcus pyogenes serotype M1.